A 328-amino-acid polypeptide reads, in one-letter code: MNKIKITPSVPTHMEVEKIKENAIRLHVYPYESGYAISVAHPLRRLLLSSTAGYAPIGLKIEGVQHEFDSVRGMLEDVAAFIINLKNVRFKLRDSEQENVTLEYEFSGPKELFGKDFENDLVEVVTPDAFLATLNEDAELKMSIIVQKGIGYVPSEMIRDLLPQGYIPLDAFFTPVKKAVYEIEKVLVEDNPNYEKIVFDIETDGQVDPVSALKMAMNVMQSQMEIFTNDIEVTETVGQNIENSEIFYQPLDILDLSARSYNCLDKAGIKYVGELLLMSNEALKSIKNLGKKSLDEIQEKLSELNIDLGKLSDQEKETILKKIEQNKS.

An alpha N-terminal domain (alpha-NTD) region spans residues 1–230 (MNKIKITPSV…QSQMEIFTND (230 aa)). The interval 243 to 328 (NSEIFYQPLD…ILKKIEQNKS (86 aa)) is alpha C-terminal domain (alpha-CTD).

It belongs to the RNA polymerase alpha chain family. In terms of assembly, homodimer. The RNAP catalytic core consists of 2 alpha, 1 beta, 1 beta' and 1 omega subunit. When a sigma factor is associated with the core the holoenzyme is formed, which can initiate transcription.

It catalyses the reaction RNA(n) + a ribonucleoside 5'-triphosphate = RNA(n+1) + diphosphate. Its function is as follows. DNA-dependent RNA polymerase catalyzes the transcription of DNA into RNA using the four ribonucleoside triphosphates as substrates. This chain is DNA-directed RNA polymerase subunit alpha, found in Nitratiruptor sp. (strain SB155-2).